The following is a 594-amino-acid chain: Amino-acid permease 1 (594 aa).

The next 12 membrane-spanning stretches (helical) occupy residues 75 to 95 (QMIA…GKSL), 101 to 121 (GSLM…ILSL), 146 to 166 (IGFA…PSEI), 181 to 201 (LNPA…NAFG), 210 to 230 (FVSS…AIII), 297 to 317 (VFYR…LVVP), 323 to 343 (LGNV…VLPH), 344 to 364 (ITNA…VFAA), 390 to 410 (PVIS…NAAP), 416 to 436 (FDWL…LSFI), 468 to 488 (YGVL…IFPV), and 498 to 518 (FFVS…SPIF). A disordered region spans residues 550–587 (TSELSEKDLTKPNLQSNDNKNSEDLESNTPPQKKSALQ).

It belongs to the amino acid-polyamine-organocation (APC) superfamily.

It is found in the membrane. This is Amino-acid permease 1 (aap1) from Schizosaccharomyces pombe (strain 972 / ATCC 24843) (Fission yeast).